The following is a 127-amino-acid chain: Large ribosomal subunit protein bL17 (127 aa).

Belongs to the bacterial ribosomal protein bL17 family. In terms of assembly, part of the 50S ribosomal subunit. Contacts protein L32.

The polypeptide is Large ribosomal subunit protein bL17 (Lactobacillus helveticus (strain DPC 4571)).